Reading from the N-terminus, the 509-residue chain is Cytochrome P450 monooxygenase ARMGADRAFT_974139 (509 aa).

A helical membrane pass occupies residues 4-24; it reads ASLAVVVWAILLVLWLRRIFG. N-linked (GlcNAc...) asparagine glycans are attached at residues N96 and N279. Residue C439 coordinates heme.

It belongs to the cytochrome P450 family. Heme is required as a cofactor.

It is found in the membrane. Its pathway is secondary metabolite biosynthesis. Its function is as follows. Cytochrome P450 monooxygenase, part of the gene cluster that mediates the biosynthesis of melleolides, a range of antifungal and phytotoxic polyketide derivatives composed of an orsellinic acid (OA) moiety esterified to various sesquiterpene alcohols. The first step in melleolides biosynthesis is performed by the delta(6)-protoilludene synthase PRO1 which catalyzes the cyclization of farnesyl diphosphate to protoilludene. The orsellinic acid synthase armB produces OA by condensing acetyl-CoA with 3 malonyl-CoA units in a three-round chain elongation reaction folowed by a C2-C7 ring closure. ArmB further catalyzes the trans-esterification of OA to the various sesquiterpene alcohols resulting from the hydroxylation of protoilludene. The melleolides cluster also includes 5 cytochrome P450 monooxygenases, 4 NAD(+)-dependent oxidoreductases, one flavin-dependent oxidoreductase, and one O-methyltransferase. The cytochrome P450 monooxygenases may be involved in protoilludene hydroxylation to elaborate melleolides with multiple alcohol groups, such as melleolide D, which carries alcohol functionalities at C-4, C-5, C-10, and C-13. The role of the NAD(+)-dependent enzymes remains unknown. Numerous melleolides, including arnamial, show 5'-O-methylation of the aromatic moiety which may be catalyzed by the methyltransferase encoded in the cluster. The flavin-dependent oxidoreductase might represent the dehydrogenase yielding the aldehyde in position 1 of arnamial and other melleolides. Finally, several halogenase localized outside of the cluster, are able to catalyze the transfer of a single chlorine atom to the melleolide backbone, resulting in a 6'-chloromelleolide product. This chain is Cytochrome P450 monooxygenase ARMGADRAFT_974139, found in Armillaria gallica (Bulbous honey fungus).